The following is a 158-amino-acid chain: ATP synthase subunit beta, mitochondrial (158 aa).

The protein belongs to the ATPase alpha/beta chains family. In terms of assembly, F-type ATPases have 2 components, CF(1) - the catalytic core - and CF(0) - the membrane proton channel. CF(1) has five subunits: alpha(3), beta(3), gamma(1), delta(1), epsilon(1). CF(0) has three main subunits: a, b and c.

The protein localises to the mitochondrion. The protein resides in the mitochondrion inner membrane. The catalysed reaction is ATP + H2O + 4 H(+)(in) = ADP + phosphate + 5 H(+)(out). In terms of biological role, mitochondrial membrane ATP synthase (F(1)F(0) ATP synthase or Complex V) produces ATP from ADP in the presence of a proton gradient across the membrane which is generated by electron transport complexes of the respiratory chain. F-type ATPases consist of two structural domains, F(1) - containing the extramembraneous catalytic core, and F(0) - containing the membrane proton channel, linked together by a central stalk and a peripheral stalk. During catalysis, ATP synthesis in the catalytic domain of F(1) is coupled via a rotary mechanism of the central stalk subunits to proton translocation. Subunits alpha and beta form the catalytic core in F(1). Rotation of the central stalk against the surrounding alpha(3)beta(3) subunits leads to hydrolysis of ATP in three separate catalytic sites on the beta subunits. The sequence is that of ATP synthase subunit beta, mitochondrial from Schizaphis graminum (Green bug aphid).